We begin with the raw amino-acid sequence, 255 residues long: L-erythrulose-1-phosphate isomerase (255 aa).

His-98 (electrophile) is an active-site residue. Residue Glu-171 is the Proton acceptor of the active site. Substrate is bound by residues Gly-177 and Ser-214.

This sequence belongs to the triosephosphate isomerase family. In terms of assembly, homodimer.

The protein localises to the cytoplasm. The catalysed reaction is L-erythrulose 1-phosphate = D-erythrulose 4-phosphate. It participates in carbohydrate metabolism; erythritol degradation. In terms of biological role, catalyzes the isomerization of D-erythrulose-4P to L-erythrulose-1P. The polypeptide is L-erythrulose-1-phosphate isomerase (Rhizobium meliloti (strain 1021) (Ensifer meliloti)).